We begin with the raw amino-acid sequence, 72 residues long: Translation initiation factor IF-1 (72 aa).

The 72-residue stretch at 1-72 folds into the S1-like domain; the sequence is MSKEDVIEVE…TRGRITWRAK (72 aa).

The protein belongs to the IF-1 family. As to quaternary structure, component of the 30S ribosomal translation pre-initiation complex which assembles on the 30S ribosome in the order IF-2 and IF-3, IF-1 and N-formylmethionyl-tRNA(fMet); mRNA recruitment can occur at any time during PIC assembly.

The protein resides in the cytoplasm. Functionally, one of the essential components for the initiation of protein synthesis. Stabilizes the binding of IF-2 and IF-3 on the 30S subunit to which N-formylmethionyl-tRNA(fMet) subsequently binds. Helps modulate mRNA selection, yielding the 30S pre-initiation complex (PIC). Upon addition of the 50S ribosomal subunit IF-1, IF-2 and IF-3 are released leaving the mature 70S translation initiation complex. This Acetivibrio thermocellus (strain ATCC 27405 / DSM 1237 / JCM 9322 / NBRC 103400 / NCIMB 10682 / NRRL B-4536 / VPI 7372) (Clostridium thermocellum) protein is Translation initiation factor IF-1.